Here is a 112-residue protein sequence, read N- to C-terminus: Urease subunit gamma (112 aa).

This sequence belongs to the urease gamma subunit family. Heterotrimer of UreA (gamma), UreB (beta) and UreC (alpha) subunits. Three heterotrimers associate to form the active enzyme.

Its subcellular location is the cytoplasm. The enzyme catalyses urea + 2 H2O + H(+) = hydrogencarbonate + 2 NH4(+). It participates in nitrogen metabolism; urea degradation; CO(2) and NH(3) from urea (urease route): step 1/1. The sequence is that of Urease subunit gamma from Gloeothece citriformis (strain PCC 7424) (Cyanothece sp. (strain PCC 7424)).